The sequence spans 95 residues: Glutamyl-tRNA(Gln) amidotransferase subunit C 1 (95 aa).

The protein belongs to the GatC family. In terms of assembly, heterotrimer of A, B and C subunits.

The enzyme catalyses L-glutamyl-tRNA(Gln) + L-glutamine + ATP + H2O = L-glutaminyl-tRNA(Gln) + L-glutamate + ADP + phosphate + H(+). It carries out the reaction L-aspartyl-tRNA(Asn) + L-glutamine + ATP + H2O = L-asparaginyl-tRNA(Asn) + L-glutamate + ADP + phosphate + 2 H(+). Functionally, allows the formation of correctly charged Asn-tRNA(Asn) or Gln-tRNA(Gln) through the transamidation of misacylated Asp-tRNA(Asn) or Glu-tRNA(Gln) in organisms which lack either or both of asparaginyl-tRNA or glutaminyl-tRNA synthetases. The reaction takes place in the presence of glutamine and ATP through an activated phospho-Asp-tRNA(Asn) or phospho-Glu-tRNA(Gln). This Clostridium acetobutylicum (strain ATCC 824 / DSM 792 / JCM 1419 / IAM 19013 / LMG 5710 / NBRC 13948 / NRRL B-527 / VKM B-1787 / 2291 / W) protein is Glutamyl-tRNA(Gln) amidotransferase subunit C 1 (gatC1).